The chain runs to 314 residues: Ribosomal RNA small subunit methyltransferase H (314 aa).

S-adenosyl-L-methionine is bound by residues 35 to 37 (GGH), aspartate 55, phenylalanine 79, aspartate 101, and glutamine 108. The disordered stretch occupies residues 276–296 (QGGQTLKPVGKKLMPSEAEVA).

It belongs to the methyltransferase superfamily. RsmH family.

Its subcellular location is the cytoplasm. The catalysed reaction is cytidine(1402) in 16S rRNA + S-adenosyl-L-methionine = N(4)-methylcytidine(1402) in 16S rRNA + S-adenosyl-L-homocysteine + H(+). Its function is as follows. Specifically methylates the N4 position of cytidine in position 1402 (C1402) of 16S rRNA. This chain is Ribosomal RNA small subunit methyltransferase H, found in Pectobacterium atrosepticum (strain SCRI 1043 / ATCC BAA-672) (Erwinia carotovora subsp. atroseptica).